The chain runs to 296 residues: Carboxylesterase YbfK (296 aa).

Residues Ser-129, Glu-244, and His-273 each act as charge relay system in the active site.

This sequence belongs to the AB hydrolase superfamily.

The protein localises to the cytoplasm. The catalysed reaction is a carboxylic ester + H2O = an alcohol + a carboxylate + H(+). In terms of biological role, shows carboxylesterase activity in vitro. The protein is Carboxylesterase YbfK (ybfK) of Bacillus subtilis (strain 168).